The chain runs to 336 residues: Melanoma-associated antigen B17 (336 aa).

The segment covering 1-17 (MPRGQASKRRAREKRRQ) has biased composition (basic residues). Positions 1 to 108 (MPRGQASKRR…SSSESTGRDL (108 aa)) are disordered. Low complexity-rich tracts occupy residues 39 to 54 (PSSS…QSFP) and 62 to 80 (SQRA…LTSS). Polar residues predominate over residues 90–103 (ESPNSFHGPSSSES). Positions 109–336 (LNTKTGELVQ…RARASRSFQP (228 aa)) constitute an MAGE domain.

This chain is Melanoma-associated antigen B17 (MAGEB17), found in Homo sapiens (Human).